We begin with the raw amino-acid sequence, 259 residues long: Small ribosomal subunit protein uS2 (259 aa).

The disordered stretch occupies residues 224-259 (GKQGEDDQQVAPAEDVAEEVSDESLQDLKNSVEGND). The segment covering 238–248 (DVAEEVSDESL) has biased composition (acidic residues). Residues 250 to 259 (DLKNSVEGND) are compositionally biased toward polar residues.

Belongs to the universal ribosomal protein uS2 family.

This chain is Small ribosomal subunit protein uS2, found in Limosilactobacillus fermentum (strain NBRC 3956 / LMG 18251) (Lactobacillus fermentum).